Reading from the N-terminus, the 963-residue chain is Ras-interacting protein 1 (963 aa).

Residues M1 to G10 are compositionally biased toward basic and acidic residues. 2 disordered regions span residues M1 to G22 and L35 to W118. A compositionally biased stretch (low complexity) spans S41–S57. R94 is subject to Omega-N-methylarginine. A compositionally biased stretch (gly residues) spans S96–G113. The region spanning P144–E259 is the Ras-associating domain. A phosphoserine mark is found at S188, S280, and S292. The segment at A267–A356 is disordered. Over residues A290–G301 the composition is skewed to low complexity. Residues P302–G313 are compositionally biased toward gly residues. Over residues N320–Q333 the composition is skewed to low complexity. Residues S326, S328, S331, and S419 each carry the phosphoserine modification. The 298-residue stretch at G600–T897 folds into the Dilute domain.

Interacts with Ras family members that have been activated by GTP binding. Interacts with HRAS, RAP1A, RAP2, RRAS, RAF1 and RRAS2. Interacts with MYH9 and ARHGAP29. Highly expressed in heart. Detected at lower levels in placenta and pancreas.

The protein localises to the cytoplasm. It is found in the perinuclear region. The protein resides in the golgi apparatus. It localises to the golgi stack. Its function is as follows. Required for the proper formation of vascular structures that develop via both vasculogenesis and angiogenesis. Acts as a critical and vascular-specific regulator of GTPase signaling, cell architecture, and adhesion, which is essential for endothelial cell morphogenesis and blood vessel tubulogenesis. Regulates the activity of Rho GTPases in part by recruiting ARHGAP29 and suppressing RhoA signaling and dampening ROCK and MYH9 activities in endothelial cells. May act as effector for Golgi-bound HRAS and other Ras-like proteins. May promote HRAS-mediated transformation. Negative regulator of amino acid starvation-induced autophagy. This is Ras-interacting protein 1 (RASIP1) from Homo sapiens (Human).